Reading from the N-terminus, the 213-residue chain is Orotate phosphoribosyltransferase (213 aa).

Lysine 26 is a 5-phospho-alpha-D-ribose 1-diphosphate binding site. 34-35 (FF) is a binding site for orotate. 5-phospho-alpha-D-ribose 1-diphosphate contacts are provided by residues 72–73 (YK), arginine 98, lysine 99, lysine 102, histidine 104, and 123–131 (DDVISAGTS). The orotate site is built by serine 127 and arginine 155.

This sequence belongs to the purine/pyrimidine phosphoribosyltransferase family. PyrE subfamily. In terms of assembly, homodimer. Requires Mg(2+) as cofactor.

It catalyses the reaction orotidine 5'-phosphate + diphosphate = orotate + 5-phospho-alpha-D-ribose 1-diphosphate. It participates in pyrimidine metabolism; UMP biosynthesis via de novo pathway; UMP from orotate: step 1/2. Its function is as follows. Catalyzes the transfer of a ribosyl phosphate group from 5-phosphoribose 1-diphosphate to orotate, leading to the formation of orotidine monophosphate (OMP). This Neisseria meningitidis serogroup A / serotype 4A (strain DSM 15465 / Z2491) protein is Orotate phosphoribosyltransferase.